The chain runs to 216 residues: Transmembrane protein 186 (216 aa).

Residues 1 to 68 lie on the Mitochondrial matrix side of the membrane; that stretch reads MAFLLRVVPR…IYRFRAIRAI (68 aa). The tract at residues 31–52 is disordered; that stretch reads GDSKRWVGSRSPHSREKSPGTE. Residues 69 to 91 form a helical membrane-spanning segment; the sequence is GFLSRLKLAQTAVTVVALPPGFY. Residues 92–103 lie on the Mitochondrial intermembrane side of the membrane; that stretch reads CYSQGLMTLSSL. The chain crosses the membrane as a helical span at residues 104–124; that stretch reads CLLGGVASFALAMLCWMSHFF. Over 125 to 216 the chain is Mitochondrial matrix; it reads RRLVGILYVN…GTLATLKNSK (92 aa).

This sequence belongs to the TMEM186 family. In terms of assembly, part of the mitochondrial complex I assembly/MCIA complex that comprises at least the core subunits TMEM126B, NDUFAF1, ECSIT and ACAD9 and complement subunits such as COA1 and TMEM186. Interacts with MT-ND3.

It localises to the mitochondrion inner membrane. In terms of biological role, as part of the MCIA complex, required for efficient assembly of the mitochondrial complex I. This is Transmembrane protein 186 from Mus musculus (Mouse).